The sequence spans 469 residues: SWI/SNF complex subunit SWI3B (469 aa).

The interval 1–42 (MAMKAPDPGGSGEILPSTPSLSETTSGGAAAASKSAQLPSSS) is disordered. Over residues 15-42 (LPSTPSLSETTSGGAAAASKSAQLPSSS) the composition is skewed to low complexity. The region spanning 48 to 145 (IHVPSYSSWF…YNSSASAKPL (98 aa)) is the SWIRM domain. The 52-residue stretch at 223–274 (ESKPEWSDKEILLLLEAVMHYGDDWKKVASHVIGRTEKDCVSQFVKLPFGEQ) folds into the SANT domain. Basic and acidic residues-rich tracts occupy residues 293 to 306 (DSDI…DKDG) and 360 to 369 (DKNASRDPNR). 2 disordered regions span residues 293-314 (DSDI…KRIK) and 360-387 (DKNA…ESER). Residues 370 to 380 (QDANAASSGET) show a composition bias toward polar residues. The stretch at 423 to 447 (VHFEKLDLEMERSRKQLEEVRNLLF) forms a coiled coil.

Homodimers and heterodimers. Interacts with SWI3A, SWI3C, SWI3D, BSH, BRM and FCA (via C-terminus), and (via N-terminus) with HAB1. Interacts with MORC6 and SUVH9. As to expression, expressed in roots, stems, leaves, flowers and siliques.

The protein resides in the nucleus. Functionally, component of a multiprotein complex equivalent of the SWI/SNF complex, an ATP-dependent chromatin-remodeling complex, which is required for the positive and negative regulation of gene expression of a large number of genes. It changes chromatin structure by altering DNA-histone contacts within a nucleosome, leading eventually to a change in nucleosome position, thus facilitating or repressing binding of gene-specific transcription factors. May play an essential role in the transition from the vegetative to the reproductive phase of development. May be a positive regulator of ABA signaling. In Arabidopsis thaliana (Mouse-ear cress), this protein is SWI/SNF complex subunit SWI3B (SWI3B).